We begin with the raw amino-acid sequence, 337 residues long: Ribose-phosphate pyrophosphokinase 4 (337 aa).

The residue at position 2 (Ser2) is an N-acetylserine. Mg(2+) is bound by residues Asp158 and His160. A binding of phosphoribosylpyrophosphate region spans residues 241-256; the sequence is GCHVVIVDDLVQSGGT.

This sequence belongs to the ribose-phosphate pyrophosphokinase family.

It carries out the reaction D-ribose 5-phosphate + ATP = 5-phospho-alpha-D-ribose 1-diphosphate + AMP + H(+). This chain is Ribose-phosphate pyrophosphokinase 4 (PRS4), found in Arabidopsis thaliana (Mouse-ear cress).